The sequence spans 465 residues: Soluble pyridine nucleotide transhydrogenase (465 aa).

36–45 serves as a coordination point for FAD; it reads ERYDNVGGGC.

Belongs to the class-I pyridine nucleotide-disulfide oxidoreductase family. FAD is required as a cofactor.

The protein resides in the cytoplasm. It carries out the reaction NAD(+) + NADPH = NADH + NADP(+). Its function is as follows. Conversion of NADPH, generated by peripheral catabolic pathways, to NADH, which can enter the respiratory chain for energy generation. This Sodalis glossinidius (strain morsitans) protein is Soluble pyridine nucleotide transhydrogenase.